Here is a 101-residue protein sequence, read N- to C-terminus: Small ribosomal subunit protein uS14 (101 aa).

The protein belongs to the universal ribosomal protein uS14 family. In terms of assembly, part of the 30S ribosomal subunit. Contacts proteins S3 and S10.

Its function is as follows. Binds 16S rRNA, required for the assembly of 30S particles and may also be responsible for determining the conformation of the 16S rRNA at the A site. The protein is Small ribosomal subunit protein uS14 of Shewanella piezotolerans (strain WP3 / JCM 13877).